The chain runs to 30 residues: Snaclec carinactivase-1 regulatory subunit 17 kDa chain (30 aa).

The 30-residue stretch at 1 to 30 folds into the C-type lectin domain; sequence DCLPGWSSHEGHCYKVFNQEMYWADAEKFC. C2 and C13 are disulfide-bonded.

It belongs to the snaclec family. In terms of assembly, heterodimer of a metalloproteinase subunit and a regulatory subunit comprising two polypeptides disulfide-linked (14 kDa and 17 kDa chains). Expressed by the venom gland.

The protein localises to the secreted. Calcium-dependent prothrombin activator. This protein may activate prothrombin via recognition by the regulatory subunit of the calcium ion bound conformation of its gamma-carboxyglutamic acid (GLA) domain, and the subsequent conversion of prothrombin to active thrombin is catalyzed by the catalytic subunit. In Echis carinatus (Saw-scaled viper), this protein is Snaclec carinactivase-1 regulatory subunit 17 kDa chain.